The sequence spans 141 residues: Small ribosomal subunit protein uS12 (141 aa).

The segment at 118–141 (TGVDKRRQQRSAYGAKRPKADKKK) is disordered.

This sequence belongs to the universal ribosomal protein uS12 family. Part of the 30S ribosomal subunit. Contacts proteins S8 and S17. May interact with IF1 in the 30S initiation complex.

Its function is as follows. With S4 and S5 plays an important role in translational accuracy. Functionally, interacts with and stabilizes bases of the 16S rRNA that are involved in tRNA selection in the A site and with the mRNA backbone. Located at the interface of the 30S and 50S subunits, it traverses the body of the 30S subunit contacting proteins on the other side and probably holding the rRNA structure together. The combined cluster of proteins S8, S12 and S17 appears to hold together the shoulder and platform of the 30S subunit. The sequence is that of Small ribosomal subunit protein uS12 from Mycoplasmoides gallisepticum (strain R(low / passage 15 / clone 2)) (Mycoplasma gallisepticum).